Reading from the N-terminus, the 231-residue chain is Small ribosomal subunit protein uS3 (231 aa).

Positions 39–107 constitute a KH type-2 domain; that stretch reads IRKYIVENLP…DVKLNIVEIR (69 aa).

It belongs to the universal ribosomal protein uS3 family. Part of the 30S ribosomal subunit. Forms a tight complex with proteins S10 and S14.

Binds the lower part of the 30S subunit head. Binds mRNA in the 70S ribosome, positioning it for translation. This is Small ribosomal subunit protein uS3 from Novosphingobium aromaticivorans (strain ATCC 700278 / DSM 12444 / CCUG 56034 / CIP 105152 / NBRC 16084 / F199).